The chain runs to 722 residues: Tegument protein UL46 (722 aa).

The segment at 423 to 534 is disordered; the sequence is RLAASGPPGG…AAAARPLAAQ (112 aa). Composition is skewed to basic and acidic residues over residues 440–451 and 474–491; these read CRDKIQRTRRDN and HRED…DRGP. Pro residues predominate over residues 510–522; the sequence is PRLPPRNPAPPEQ. Residues 523-534 are compositionally biased toward low complexity; sequence RPAAAARPLAAQ.

This sequence belongs to the herpesviridae HHV-1 VP11/12 protein family. In terms of assembly, interacts with VP16. Interacts with host LCK, PIK3R1, SHC1 AND GRB2; these interactions promote the activation of the PI3K/AKT pathway. Interacts with host YWHAB. Interacts with ICP0; this interaction targets UL46 for degradation by the proteasome. Phosphorylated by host LCK. The phosphorylation seems to be lymphocyte-specific.

It localises to the virion tegument. It is found in the host cell membrane. Plays a role in the activation of the host PI3K/AKT pathway to promote cell survival. Interacts with and activates host LCK and thereby recruits downstream partners SHC1, GRB2 and PI3KR1 in order to activate the PI3K pathway by phosphorylating host AKT on its activating residues. This mechanism is inhibited by the viral protein US3 that instead promotes incorporation of UL46 into virions. The chain is Tegument protein UL46 from Homo sapiens (Human).